A 548-amino-acid chain; its full sequence is MALHVPKAPGFAQMLKEGAKHFSGLEEAVYRNIQACKELAQTTRTAYGPNGMNKMVINHLEKLFVTNDAATILRELEVQHPAAKMIVMASHMQEQEVGDGTNFVLVFAGALLELAEELLRIGLSVSEVIEGYEIACRKAHEILPNLVCCSAKNLRDIDEVSSLLRTSIMSKQYGNEVFLAKLIAQACVSIFPDSGHFNVDNIRVCKILGSGISSSSVLHGMVFKKETEGDVTSVKDAKIAVYSCPFDGMITETKGTVLIKTAEELMNFSKGEENLMDAQVKAIADTGANVVVTGGKVADMALHYANKYNIMLVRLNSKWDLRRLCKTVGATALPRLTPPVLEEMGHCDSVYLSEVGDTQVVVFKHEKEDGAISTIVLRGSTDNLMDDIERAVDDGVNTFKVLTRDKRLVPGGGATEIELAKQITSYGETCPGLEQYAIKKFAEAFEAIPRALAENSGVKANEVISKLYAVHQEGNKNVGLDIEAEVPAVKDMLEAGILDTYLGKYWAIKLATNAAVTVLRVDQIIMAKPAGGPKPPSGKKDWDDDQND.

An N-acetylalanine modification is found at A2. S23 carries the post-translational modification Phosphoserine. Y30 carries the phosphotyrosine modification. Residues Y47 and G48 each contribute to the ADP site. D99 is a Mg(2+) binding site. 4 residues coordinate ADP: G100, T101, N102, and F103. Positions 100, 101, and 102 each coordinate ATP. At S162 the chain carries Phosphoserine. ADP is bound by residues M169, S170, and K171. Residues S170 and K171 each coordinate ATP. Position 213 is a phosphoserine (S213). Residues K224, K254, and K260 each participate in a glycyl lysine isopeptide (Lys-Gly) (interchain with G-Cter in SUMO2) cross-link. A phosphoserine mark is found at S269 and S317. 2 positions are modified to N6-acetyllysine: K318 and K400. G412 contacts ADP. ATP is bound at residue G412. A Glycyl lysine isopeptide (Lys-Gly) (interchain with G-Cter in SUMO1) cross-link involves residue K459. Residue K466 is modified to N6-acetyllysine. D499 contacts ADP. ATP-binding residues include D499 and K504. At Y505 the chain carries Phosphotyrosine. The tract at residues P529–D548 is disordered. Residue K534 forms a Glycyl lysine isopeptide (Lys-Gly) (interchain with G-Cter in SUMO2) linkage. A Phosphoserine modification is found at S537. A Glycyl lysine isopeptide (Lys-Gly) (interchain with G-Cter in SUMO2) cross-link involves residue K539.

Belongs to the TCP-1 chaperonin family. As to quaternary structure, component of the chaperonin-containing T-complex (TRiC), a hexadecamer composed of two identical back-to-back stacked rings enclosing a protein folding chamber. Each ring is made up of eight different subunits: TCP1/CCT1, CCT2, CCT3, CCT4, CCT5, CCT6A/CCT6, CCT7, CCT8. Interacts with PACRG. Interacts with DNAAF4. Interacts with synaptic plasticity regulator PANTS.

It localises to the cytoplasm. The protein localises to the cytoskeleton. It is found in the microtubule organizing center. Its subcellular location is the centrosome. The protein resides in the cilium basal body. It carries out the reaction ATP + H2O = ADP + phosphate + H(+). Component of the chaperonin-containing T-complex (TRiC), a molecular chaperone complex that assists the folding of actin, tubulin and other proteins upon ATP hydrolysis. The TRiC complex mediates the folding of WRAP53/TCAB1, thereby regulating telomere maintenance. As part of the TRiC complex may play a role in the assembly of BBSome, a complex involved in ciliogenesis regulating transports vesicles to the cilia. The chain is T-complex protein 1 subunit theta (CCT8) from Homo sapiens (Human).